A 366-amino-acid chain; its full sequence is Cytochrome c peroxidase, mitochondrial (366 aa).

A mitochondrion-targeting transit peptide spans 1 to 46 (MASAARSASRAFLRSTPTTSSFRPAVRAARFALPAQGFRAAGRRGY). Residue H127 is the Proton acceptor of the active site. H250 serves as a coordination point for heme b. The active-site Tryptophan radical intermediate is the W266.

The protein belongs to the peroxidase family. Cytochrome c peroxidase subfamily. In terms of assembly, forms a one-to-one complex with cytochrome c. It depends on heme b as a cofactor.

The protein localises to the mitochondrion matrix. It is found in the mitochondrion intermembrane space. It catalyses the reaction 2 Fe(II)-[cytochrome c] + H2O2 + 2 H(+) = 2 Fe(III)-[cytochrome c] + 2 H2O. In terms of biological role, destroys radicals which are normally produced within the cells and which are toxic to biological systems. The polypeptide is Cytochrome c peroxidase, mitochondrial (ccp1) (Aspergillus fumigatus (strain ATCC MYA-4609 / CBS 101355 / FGSC A1100 / Af293) (Neosartorya fumigata)).